A 122-amino-acid chain; its full sequence is Large ribosomal subunit protein uL14 (122 aa).

Belongs to the universal ribosomal protein uL14 family. As to quaternary structure, part of the 50S ribosomal subunit. Forms a cluster with proteins L3 and L19. In the 70S ribosome, L14 and L19 interact and together make contacts with the 16S rRNA in bridges B5 and B8.

Its function is as follows. Binds to 23S rRNA. Forms part of two intersubunit bridges in the 70S ribosome. The chain is Large ribosomal subunit protein uL14 from Mycoplasmopsis agalactiae (strain NCTC 10123 / CIP 59.7 / PG2) (Mycoplasma agalactiae).